We begin with the raw amino-acid sequence, 1165 residues long: Transient receptor potential cation channel subfamily M member 5 (1165 aa).

At 1-715 (MVEKSSERFD…LRRWNRFWSA (715 aa)) the chain is on the cytoplasmic side. At Ser-121 the chain carries Phosphoserine. Ca(2+) is bound by residues Glu-212, Cys-324, Asp-333, Asp-336, and Glu-337. A helical membrane pass occupies residues 716–740 (PVTVFMGNVIMYFAFLILFSYVLLL). The Extracellular segment spans residues 741–751 (DFRPPPPYGPS). The helical transmembrane segment at 752–771 (AAEIILYFWVFTLVLEEIRQ) threads the bilayer. Glu-768 and Gln-771 together coordinate Ca(2+). Over 772–792 (SFFTDEDMSILKKMKLYVEDN) the chain is Cytoplasmic. The chain crosses the membrane as a helical span at residues 793 to 811 (WNKCDMVAISLFVVGLSCR). 2 residues coordinate Ca(2+): Asn-794 and Asp-797. The Extracellular segment spans residues 812-818 (MAMSTYE). A helical transmembrane segment spans residues 819-841 (AGRTVLALDFMVFTLRLIHIFAI). Residues 842-850 (HKQLGPKII) lie on the Cytoplasmic side of the membrane. Residues 851 to 880 (IVERMIKDVFFFLFFLSVWLIAYGVTTQAL) traverse the membrane as a helical segment. Topologically, residues 881 to 889 (LHPNDPRID) are extracellular. An intramembrane region (pore-forming) is located at residues 890–930 (WVFRRALYRPYLHIFGQIPLEEIDAAKMPDDNCTTDVQEII). The short motif at 904-906 (FGQ) is the Selectivity filter element. At 931 to 942 (LGTLPPCPNIYA) the chain is on the extracellular side. The helical transmembrane segment at 943–977 (NWLVILLLVIYLLVTNVLLLNLLIAMFSYTFQVVQ) threads the bilayer. The Cytoplasmic portion of the chain corresponds to 978–1165 (ENADIFWKFQ…TDKKLPFIDH (188 aa)). A Ca(2+)-binding site is contributed by Glu-994. A disordered region spans residues 1122 to 1165 (RDAPKAPRSIAGSSRDQQPQGAKRQQPAGHPAYGTDKKLPFIDH). Over residues 1132–1141 (AGSSRDQQPQ) the composition is skewed to polar residues. Basic and acidic residues predominate over residues 1156–1165 (TDKKLPFIDH).

This sequence belongs to the transient receptor (TC 1.A.4) family. LTrpC subfamily. TRPM5 sub-subfamily. Homotetramer.

The protein localises to the cell membrane. The catalysed reaction is Na(+)(in) = Na(+)(out). It carries out the reaction K(+)(in) = K(+)(out). Its activity is regulated as follows. Ca(2+)-activated cation channel. Displays voltage dependence modulation. Regulated by PI(4,5)P2 levels. PI(4,5)P 2 reverses the Ca(2+) -induced desensitization of channels. Is highly temperature-sensitive. Functionally, monovalent cation-selective ion channel activated by intracellular Ca(2+) in a voltage- and temperature-dependent manner. Mediates the transport of Na(+), K(+) and Cs(+) ions equally well. Activated directly by increase in intracellular Ca(2+), but is impermeable to it. The activation mechanism of TRPM5 involves a multistep process. TRPM5 activation involves ligand binding (i.e., tastant molecule, glucose stimulation) to Gq/G-protein coupled receptors (GPCR) and leads to the breakdown of phosphatidylinositol bisphosphate (PIP2) into diacylglycerol (DAG) and inositol trisphosphate (IP3), IP3 binds to its receptors in the endoplasmic reticulum and cause Ca(2+) release. Simultaneously with the intracellular Ca(2+) release, DAG activates the protein kinase C (PKC), which phosphorylates the TRPM5 channel. This phosphorylation combined with the bound Ca(2+), leads to a robust inward current allowing the entry of sodium ions (Na+) into the cell. This ion influx depolarizes the cell membrane, generating action potentials that propagate TRPM5 signals. The sequence is that of Transient receptor potential cation channel subfamily M member 5 from Danio rerio (Zebrafish).